The chain runs to 431 residues: Tyrosine--tRNA ligase (431 aa).

Tyr-34 is an L-tyrosine binding site. Residues 39-48 (PTADSLHIGH) carry the 'HIGH' region motif. L-tyrosine is bound by residues Tyr-171 and Gln-175. The short motif at 231–235 (KFGKT) is the 'KMSKS' region element. Residue Lys-234 coordinates ATP. An S4 RNA-binding domain is found at 353–422 (INVVEALVKT…GKYTILRRGK (70 aa)).

The protein belongs to the class-I aminoacyl-tRNA synthetase family. TyrS type 1 subfamily. Homodimer.

It localises to the cytoplasm. It carries out the reaction tRNA(Tyr) + L-tyrosine + ATP = L-tyrosyl-tRNA(Tyr) + AMP + diphosphate + H(+). Catalyzes the attachment of tyrosine to tRNA(Tyr) in a two-step reaction: tyrosine is first activated by ATP to form Tyr-AMP and then transferred to the acceptor end of tRNA(Tyr). The sequence is that of Tyrosine--tRNA ligase from Neisseria meningitidis serogroup C / serotype 2a (strain ATCC 700532 / DSM 15464 / FAM18).